A 465-amino-acid chain; its full sequence is Methionine aminopeptidase 2-2 (465 aa).

Residues 1–13 (MGSKTPNDHRRGP) show a composition bias toward basic and acidic residues. Residues 1–92 (MGSKTPNDHR…KKKTLLGGLQ (92 aa)) form a disordered region. The segment covering 44–55 (GETEDGEDEDDD) has biased composition (acidic residues). Basic residues predominate over residues 71-86 (TKKKNKRKKNKKKKKT). A substrate-binding site is contributed by His217. A divalent metal cation-binding residues include Asp238, Asp249, and His318. Position 326 (His326) interacts with substrate. A divalent metal cation-binding residues include Glu351 and Glu446.

Belongs to the peptidase M24A family. Methionine aminopeptidase eukaryotic type 2 subfamily. Co(2+) serves as cofactor. Zn(2+) is required as a cofactor. Requires Mn(2+) as cofactor. It depends on Fe(2+) as a cofactor.

It is found in the cytoplasm. The enzyme catalyses Release of N-terminal amino acids, preferentially methionine, from peptides and arylamides.. Its function is as follows. Cotranslationally removes the N-terminal methionine from nascent proteins. The N-terminal methionine is often cleaved when the second residue in the primary sequence is small and uncharged (Met-Ala-, Cys, Gly, Pro, Ser, Thr, or Val). In Ajellomyces dermatitidis (strain ER-3 / ATCC MYA-2586) (Blastomyces dermatitidis), this protein is Methionine aminopeptidase 2-2.